A 76-amino-acid polypeptide reads, in one-letter code: DNA-directed RNA polymerase subunit epsilon (76 aa).

It belongs to the RNA polymerase subunit epsilon family. In terms of assembly, RNAP is composed of a core of 2 alpha, a beta and a beta' subunit. The core is associated with a delta subunit, and at least one of epsilon or omega. When a sigma factor is associated with the core the holoenzyme is formed, which can initiate transcription.

The catalysed reaction is RNA(n) + a ribonucleoside 5'-triphosphate = RNA(n+1) + diphosphate. Functionally, a non-essential component of RNA polymerase (RNAP). This Streptococcus equi subsp. equi (strain 4047) protein is DNA-directed RNA polymerase subunit epsilon.